Reading from the N-terminus, the 131-residue chain is Small ribosomal subunit protein uS8 (131 aa).

Belongs to the universal ribosomal protein uS8 family. Part of the 30S ribosomal subunit. Contacts proteins S5 and S12.

Its function is as follows. One of the primary rRNA binding proteins, it binds directly to 16S rRNA central domain where it helps coordinate assembly of the platform of the 30S subunit. The sequence is that of Small ribosomal subunit protein uS8 from Azoarcus sp. (strain BH72).